We begin with the raw amino-acid sequence, 208 residues long: Methylthioribulose-1-phosphate dehydratase (208 aa).

Positions 98 and 100 each coordinate Zn(2+).

It belongs to the aldolase class II family. MtnB subfamily. Requires Zn(2+) as cofactor.

The enzyme catalyses 5-(methylsulfanyl)-D-ribulose 1-phosphate = 5-methylsulfanyl-2,3-dioxopentyl phosphate + H2O. The protein operates within amino-acid biosynthesis; L-methionine biosynthesis via salvage pathway; L-methionine from S-methyl-5-thio-alpha-D-ribose 1-phosphate: step 2/6. Catalyzes the dehydration of methylthioribulose-1-phosphate (MTRu-1-P) into 2,3-diketo-5-methylthiopentyl-1-phosphate (DK-MTP-1-P). This Hahella chejuensis (strain KCTC 2396) protein is Methylthioribulose-1-phosphate dehydratase.